The sequence spans 79 residues: Cytochrome b (79 aa).

3 helical membrane-spanning segments follow: residues 1-7, 31-52, and 67-79; these read TALFLAM, WLIR…YLHI, and WNVG…LTMM. Residues His-37 and His-51 each contribute to the heme b site.

Belongs to the cytochrome b family. In terms of assembly, the cytochrome bc1 complex contains 3 respiratory subunits (MT-CYB, CYC1 and UQCRFS1), 2 core proteins (UQCRC1 and UQCRC2) and probably 6 low-molecular weight proteins. It depends on heme b as a cofactor.

The protein localises to the mitochondrion inner membrane. Its function is as follows. Component of the ubiquinol-cytochrome c reductase complex (complex III or cytochrome b-c1 complex) that is part of the mitochondrial respiratory chain. The b-c1 complex mediates electron transfer from ubiquinol to cytochrome c. Contributes to the generation of a proton gradient across the mitochondrial membrane that is then used for ATP synthesis. This Amphilophus citrinellus (Midas cichlid) protein is Cytochrome b (mt-cyb).